Reading from the N-terminus, the 165-residue chain is Large ribosomal subunit protein uL10 (165 aa).

Belongs to the universal ribosomal protein uL10 family. As to quaternary structure, part of the ribosomal stalk of the 50S ribosomal subunit. The N-terminus interacts with L11 and the large rRNA to form the base of the stalk. The C-terminus forms an elongated spine to which L12 dimers bind in a sequential fashion forming a multimeric L10(L12)X complex.

Its function is as follows. Forms part of the ribosomal stalk, playing a central role in the interaction of the ribosome with GTP-bound translation factors. This is Large ribosomal subunit protein uL10 from Yersinia pseudotuberculosis serotype IB (strain PB1/+).